A 126-amino-acid chain; its full sequence is Small ribosomal subunit protein uS13 (126 aa).

Residues 94–126 (RGLPVHGQRTSTNARTRKGPRRAIAGKKKPGKK) form a disordered region. The segment covering 108 to 126 (RTRKGPRRAIAGKKKPGKK) has biased composition (basic residues).

The protein belongs to the universal ribosomal protein uS13 family. In terms of assembly, part of the 30S ribosomal subunit. Forms a loose heterodimer with protein S19. Forms two bridges to the 50S subunit in the 70S ribosome.

Its function is as follows. Located at the top of the head of the 30S subunit, it contacts several helices of the 16S rRNA. In the 70S ribosome it contacts the 23S rRNA (bridge B1a) and protein L5 of the 50S subunit (bridge B1b), connecting the 2 subunits; these bridges are implicated in subunit movement. Contacts the tRNAs in the A and P-sites. This is Small ribosomal subunit protein uS13 from Streptomyces avermitilis (strain ATCC 31267 / DSM 46492 / JCM 5070 / NBRC 14893 / NCIMB 12804 / NRRL 8165 / MA-4680).